The chain runs to 1182 residues: Lysine-specific demethylase hairless (1182 aa).

Disordered regions lie at residues 227–257, 302–380, 411–443, and 507–546; these read LGLAPGGHLQQACESEGPSLHQRDGETGAGR, YQLG…KKTW, AGSPEVQGASRGPAPKRPSHPFPGTGRQGARAW, and TGHSQKSRRSPLEEKQLEEEDSSATSEEGGGGPGPEASLN. Positions 307–321 are enriched in pro residues; sequence PATPRCPSPGPPTPP. The short motif at 561 to 565 is the LXXLL motif 1 element; it reads LCRLL. The C6-type zinc-finger motif lies at 595 to 620; sequence CSRCHHGLFNTHWRCSHCSHRLCVAC. The tract at residues 697-746 is disordered; sequence GDGGQQKEPTEKTPPTPQPSCNGDSNRTKDIKEETPDSTESPAEDGAGRS. The span at 722–731 shows a compositional bias: basic and acidic residues; it reads NRTKDIKEET. Positions 753–757 match the LXXLL motif 2 motif; sequence LCELL. One can recognise a JmjC domain in the interval 939-1150; that stretch reads DASRVQNLAS…LSAQLYHQGA (212 aa). Positions 1000, 1002, and 1118 each coordinate Fe cation.

It depends on Fe(2+) as a cofactor. As to expression, expressed predominantly in brain, hair follicles and interfollicular epidermis. No expression in dermis.

The protein resides in the nucleus. It catalyses the reaction N(6),N(6)-dimethyl-L-lysyl(9)-[histone H3] + 2 2-oxoglutarate + 2 O2 = L-lysyl(9)-[histone H3] + 2 formaldehyde + 2 succinate + 2 CO2. In terms of biological role, histone demethylase that specifically demethylates both mono- and dimethylated 'Lys-9' of histone H3. May act as a transcription regulator controlling hair biology (via targeting of collagens), neural activity, and cell cycle. This chain is Lysine-specific demethylase hairless (Hr), found in Mus musculus (Mouse).